Reading from the N-terminus, the 732-residue chain is E3 ubiquitin-protein ligase hel2 (732 aa).

The tract at residues 1–48 (MSPSGPNLNNKEHNRASEKKNSRTHNKKTNRNQSKEKPVSSRSVETPK) is disordered. The span at 10 to 21 (NKEHNRASEKKN) shows a compositional bias: basic and acidic residues. The RING-type zinc finger occupies 81 to 121 (CFICAEGITYSCVLPCNHRMCHVCALRLRALYKTKECTFCK). The 71-residue stretch at 245–315 (PKCEFCNTHF…RECLERKFVV (71 aa)) folds into the LIM zinc-binding domain. Disordered regions lie at residues 345–380 (IIPQ…NETA), 411–501 (DFGF…QHQQ), and 623–732 (HDGP…FHIG). 2 stretches are compositionally biased toward polar residues: residues 366–380 (SSTP…NETA) and 415–433 (TLSN…TRTI). Over residues 457–468 (SSSAPSVPVSAP) the composition is skewed to low complexity. Serine 482 is subject to Phosphoserine. 2 stretches are compositionally biased toward polar residues: residues 490 to 501 (PMASSEQAQHQQ) and 629 to 654 (SAPS…NTPS). Residues 701 to 713 (STPNTSSNRNSNT) show a composition bias toward low complexity.

The protein belongs to the ZNF598/HEL2 family.

It localises to the cytoplasm. The catalysed reaction is S-ubiquitinyl-[E2 ubiquitin-conjugating enzyme]-L-cysteine + [acceptor protein]-L-lysine = [E2 ubiquitin-conjugating enzyme]-L-cysteine + N(6)-ubiquitinyl-[acceptor protein]-L-lysine.. The protein operates within protein modification; protein ubiquitination. Functionally, E3 ubiquitin-protein ligase that plays a key role in the ribosome quality control (RQC), a pathway that takes place when a ribosome has stalled during translation, leading to degradation of nascent peptide chains. Activated when ribosomes are stalled within an mRNA following translation of prematurely polyadenylated mRNAs. Acts as a ribosome collision sensor: specifically recognizes and binds collided ribosome and ubiquitinates the 40S ribosomal proteins rps20/uS10 and rps3/uS3. Catalyzes 'Lys-63'-linked polyubiquitination of rps20/uS10, promoting recruitment of the RQT (ribosome quality control trigger) complex, which drives the disassembly of stalled ribosomes, followed by degradation of nascent peptides. This Schizosaccharomyces pombe (strain 972 / ATCC 24843) (Fission yeast) protein is E3 ubiquitin-protein ligase hel2.